Consider the following 660-residue polypeptide: Arginine--tRNA ligase, cytoplasmic (660 aa).

Position 1 is an N-acetylmethionine (M1). Residues 1–72 (MDALVAHCSA…QAERNKPTKT (72 aa)) are could be involved in the assembly of the multisynthetase complex. L-arginine-binding positions include 200–202 (SPN), H211, Y384, D388, and Q412. Residues 201–212 (PNIAKEMHVGHL) carry the 'HIGH' region motif. The interaction with tRNA stretch occupies residues 529 to 543 (NTAAYLLYAFTRIRS).

This sequence belongs to the class-I aminoacyl-tRNA synthetase family. In terms of assembly, interacts (via N-terminus) with AIMP1 (via N-terminus); this stimulates its catalytic activity. Interacts (via N-terminus) with LARS2 (via C-terminus). Monomer. Part of a multisubunit complex that groups tRNA ligases for Arg (RARS1), Asp (DARS1), Gln (QARS1), Ile (IARS1), Leu (LARS1), Lys (KARS1), Met (MARS1) the bifunctional ligase for Glu and Pro (EPRS1) and the auxiliary subunits AIMP1/p43, AIMP2/p38 and EEF1E1/p18. Interacts with QARS1. Part of a complex composed of RARS1, QARS1 and AIMP1.

It localises to the cytoplasm. It is found in the cytosol. The enzyme catalyses tRNA(Arg) + L-arginine + ATP = L-arginyl-tRNA(Arg) + AMP + diphosphate. Forms part of a macromolecular complex that catalyzes the attachment of specific amino acids to cognate tRNAs during protein synthesis. Modulates the secretion of AIMP1 and may be involved in generation of the inflammatory cytokine EMAP2 from AIMP1. In Bos taurus (Bovine), this protein is Arginine--tRNA ligase, cytoplasmic (RARS1).